The sequence spans 215 residues: Protein Thf1 (215 aa).

The stretch at 188–209 (IELVQETIAAERRKKERRQAEQ) forms a coiled coil.

This sequence belongs to the THF1 family.

Functionally, may be involved in photosynthetic membrane biogenesis. The chain is Protein Thf1 from Synechococcus sp. (strain CC9902).